Consider the following 152-residue polypeptide: Peptide deformylase (152 aa).

Fe cation contacts are provided by C88 and H130. E131 is an active-site residue. A Fe cation-binding site is contributed by H134.

Belongs to the polypeptide deformylase family. The cofactor is Fe(2+).

The enzyme catalyses N-terminal N-formyl-L-methionyl-[peptide] + H2O = N-terminal L-methionyl-[peptide] + formate. In terms of biological role, removes the formyl group from the N-terminal Met of newly synthesized proteins. Requires at least a dipeptide for an efficient rate of reaction. N-terminal L-methionine is a prerequisite for activity but the enzyme has broad specificity at other positions. This is Peptide deformylase from Carboxydothermus hydrogenoformans (strain ATCC BAA-161 / DSM 6008 / Z-2901).